The following is a 189-amino-acid chain: Small ribosomal subunit protein uS5 (189 aa).

The S5 DRBM domain occupies 23–86; that stretch reads FIDKLVHINR…ESAKREMIYV (64 aa).

The protein belongs to the universal ribosomal protein uS5 family. Part of the 30S ribosomal subunit. Contacts proteins S4 and S8.

Functionally, with S4 and S12 plays an important role in translational accuracy. In terms of biological role, located at the back of the 30S subunit body where it stabilizes the conformation of the head with respect to the body. This chain is Small ribosomal subunit protein uS5, found in Bartonella bacilliformis (strain ATCC 35685 / KC583 / Herrer 020/F12,63).